The primary structure comprises 151 residues: Transcription antitermination protein NusB (151 aa).

It belongs to the NusB family.

Involved in transcription antitermination. Required for transcription of ribosomal RNA (rRNA) genes. Binds specifically to the boxA antiterminator sequence of the ribosomal RNA (rrn) operons. The sequence is that of Transcription antitermination protein NusB from Hamiltonella defensa subsp. Acyrthosiphon pisum (strain 5AT).